Consider the following 122-residue polypeptide: Large ribosomal subunit protein uL14 (122 aa).

This sequence belongs to the universal ribosomal protein uL14 family. Part of the 50S ribosomal subunit. Forms a cluster with proteins L3 and L19. In the 70S ribosome, L14 and L19 interact and together make contacts with the 16S rRNA in bridges B5 and B8.

In terms of biological role, binds to 23S rRNA. Forms part of two intersubunit bridges in the 70S ribosome. This chain is Large ribosomal subunit protein uL14, found in Lactobacillus gasseri (strain ATCC 33323 / DSM 20243 / BCRC 14619 / CIP 102991 / JCM 1131 / KCTC 3163 / NCIMB 11718 / NCTC 13722 / AM63).